A 139-amino-acid polypeptide reads, in one-letter code: D-ribose pyranase (139 aa).

His20 functions as the Proton donor in the catalytic mechanism. Substrate contacts are provided by residues Asp28, His106, and Tyr128–Asn130.

This sequence belongs to the RbsD / FucU family. RbsD subfamily. Homodecamer.

The protein localises to the cytoplasm. The enzyme catalyses beta-D-ribopyranose = beta-D-ribofuranose. It functions in the pathway carbohydrate metabolism; D-ribose degradation; D-ribose 5-phosphate from beta-D-ribopyranose: step 1/2. Functionally, catalyzes the interconversion of beta-pyran and beta-furan forms of D-ribose. The chain is D-ribose pyranase from Salmonella typhi.